Here is a 448-residue protein sequence, read N- to C-terminus: tRNA(Ile)-lysidine synthase (448 aa).

ATP is bound at residue 25-30 (SGGSDS).

This sequence belongs to the tRNA(Ile)-lysidine synthase family.

The protein localises to the cytoplasm. It catalyses the reaction cytidine(34) in tRNA(Ile2) + L-lysine + ATP = lysidine(34) in tRNA(Ile2) + AMP + diphosphate + H(+). Ligates lysine onto the cytidine present at position 34 of the AUA codon-specific tRNA(Ile) that contains the anticodon CAU, in an ATP-dependent manner. Cytidine is converted to lysidine, thus changing the amino acid specificity of the tRNA from methionine to isoleucine. The polypeptide is tRNA(Ile)-lysidine synthase (Brucella canis (strain ATCC 23365 / NCTC 10854 / RM-666)).